We begin with the raw amino-acid sequence, 651 residues long: Bromodomain-containing protein 7 (651 aa).

K21 participates in a covalent cross-link: Glycyl lysine isopeptide (Lys-Gly) (interchain with G-Cter in SUMO2). Residues 35–45 (TELSTGSSGHD) are compositionally biased toward polar residues. The segment at 35-132 (TELSTGSSGH…SSLAKQEEVE (98 aa)) is disordered. Positions 47-57 (SLFEDKNDHDK) are enriched in basic and acidic residues. K52 is covalently cross-linked (Glycyl lysine isopeptide (Lys-Gly) (interchain with G-Cter in SUMO2)). Basic residues predominate over residues 58–69 (HKDRKRKKRKKG). The Nuclear localization signal motif lies at 65–96 (KRKKGEKQIPGEEKGRKRRRVKEDKKKRDRDR). Over residues 70–106 (EKQIPGEEKGRKRRRVKEDKKKRDRDRVENEAEKDLQ) the composition is skewed to basic and acidic residues. Glycyl lysine isopeptide (Lys-Gly) (interchain with G-Cter in SUMO2) cross-links involve residues K127, K186, K197, K201, K212, and K241. In terms of domain architecture, Bromo spans 131-235 (VEQTPLQEAL…HSGMKILSQE (105 aa)). The interval 253 to 312 (TRKQKDGTDTSQSGEDGGCWQREREDSGDAEAHASKSPSKENKKKDNDMLEDKFKSNNLE) is disordered. Residues 273-312 (QREREDSGDAEAHASKSPSKENKKKDNDMLEDKFKSNNLE) show a composition bias toward basic and acidic residues. Phosphoserine occurs at positions 279 and 289. Glycyl lysine isopeptide (Lys-Gly) (interchain with G-Cter in SUMO2) cross-links involve residues K305 and K307. N6-acetyllysine is present on K328. K344 participates in a covalent cross-link: Glycyl lysine isopeptide (Lys-Gly) (interchain with G-Cter in SUMO2). S380 is modified (phosphoserine). A Glycyl lysine isopeptide (Lys-Gly) (interchain with G-Cter in SUMO2) cross-link involves residue K389. S482 is modified (phosphoserine). The residue at position 514 (T514) is a Phosphothreonine. Positions 536-567 (SEEAEIFQKKLDETTRLLRELQEAQNERLSTR) form a coiled coil. A Phosphoserine modification is found at S621.

In terms of assembly, interacts with TRIM24, PTPN13 and DVL1. Identified in a complex with SMARCA4/BRG1, SMARCC1/BAF155, SMARCE1/BAF57, DPF2/BAF45D and ARID2, subunits of the SWI/SNF-B (PBAF) chromatin remodeling complex. Interacts with IRF2 and HNRPUL1. Interacts (via N-terminus) with TP53. Interacts (via C-terminus) with EP300. Interacts with BRCA1. Interacts (via bromo domain) with histone H3 (via N-terminus) acetylated at 'Lys-14' (H3K14ac). Has low affinity for histone H3 acetylated at 'Lys-9' (H3K9ac). Has the highest affinity for histone H3 that is acetylated both at 'Lys-9' (H3K9ac) and at 'Lys-14' (H3K14ac). Has very low affinity for non-acetylated histone H3. Interacts (via bromo domain) with histone H4 (via N-terminus) acetylated at 'Lys-8' (H3K8ac) (in vitro).

It is found in the nucleus. It localises to the chromosome. Acts both as coactivator and as corepressor. May play a role in chromatin remodeling. Activator of the Wnt signaling pathway in a DVL1-dependent manner by negatively regulating the GSK3B phosphotransferase activity. Induces dephosphorylation of GSK3B at 'Tyr-216'. Down-regulates TRIM24-mediated activation of transcriptional activation by AR. Transcriptional corepressor that down-regulates the expression of target genes. Binds to target promoters, leading to increased histone H3 acetylation at 'Lys-9' (H3K9ac). Binds to the ESR1 promoter. Recruits BRCA1 and POU2F1 to the ESR1 promoter. Coactivator for TP53-mediated activation of transcription of a set of target genes. Required for TP53-mediated cell-cycle arrest in response to oncogene activation. Promotes acetylation of TP53 at 'Lys-382', and thereby promotes efficient recruitment of TP53 to target promoters. Inhibits cell cycle progression from G1 to S phase. The protein is Bromodomain-containing protein 7 (BRD7) of Pongo abelii (Sumatran orangutan).